Reading from the N-terminus, the 529-residue chain is Delayed-rectifier potassium channel regulatory subunit KCNS1 (529 aa).

At 1–217 (MLMLLVRGTH…LTMENPGYSL (217 aa)) the chain is on the cytoplasmic side. Residues 218-239 (PSKLFSCVSISVVLASIAAMCI) form a helical membrane-spanning segment. The Extracellular portion of the chain corresponds to 240–270 (HSLPEYQAREAAAAVAAVAAGRSPEGVRDDP). A helical transmembrane segment spans residues 271 to 293 (VLRRLEYFCIAWFSFEVSSRLLL). Residues 294–304 (APSTRNFFCHP) lie on the Cytoplasmic side of the membrane. A helical transmembrane segment spans residues 305-322 (LNLIDIVSVLPFYLTLLA). Topologically, residues 323-340 (GVALGDQGGTGGKELGHL) are extracellular. The chain crosses the membrane as a helical; Voltage-sensor span at residues 341–361 (GKVVQVFRLMRIFRVLKLARH). Residues 362 to 376 (STGLRSLGATLKHSY) lie on the Cytoplasmic side of the membrane. Residues 377–398 (REVGILLLYLAVGVSVFSGVAY) form a helical membrane-spanning segment. Topologically, residues 399-411 (TAEKEEDVGFNTI) are extracellular. Residues 412 to 423 (PACWWWGTVSMT) constitute an intramembrane region (helical). The Selectivity filter motif lies at 424 to 429 (TVGYGD). The stretch at 424-431 (TVGYGDVV) is an intramembrane region. Over 432–438 (PVTVAGK) the chain is Extracellular. The chain crosses the membrane as a helical span at residues 439 to 467 (LAASGCILGGILVVALPITIIFNKFSHFY). At 468 to 529 (RRQKALEAAV…PSEPPHPQMY (62 aa)) the chain is on the cytoplasmic side. The segment at 496–529 (SEASLETSRETSQEGRSADLETQAPSEPPHPQMY) is disordered. Residues 502-514 (TSRETSQEGRSAD) are compositionally biased toward basic and acidic residues.

This sequence belongs to the potassium channel family. S (TC 1.A.1.2) subfamily. Kv9.1/KCNS1 sub-subfamily. As to quaternary structure, heterotetramer with KCNB1. Heterotetramer with KCNB2. Does not form homomultimers.

Its subcellular location is the cell membrane. Functionally, potassium channel regulatory subunit that modulate the delayed rectifier voltage-gated potassium channel activity of KCNB1 and KCNB2 by altering their kinetics, expression levels, and shifting the half-inactivation potential to more polarized values. While it does not form functional channels on its own, it can form functional heterotetrameric channels with KCNB1 and KCNB2. Each regulatory subunit has unique regulatory properties that can lead to extensive inhibition, significant changes in kinetics, and/or substantial shifts in the voltage dependencies of the inactivation process. The polypeptide is Delayed-rectifier potassium channel regulatory subunit KCNS1 (Papio anubis (Olive baboon)).